A 283-amino-acid polypeptide reads, in one-letter code: MDIIQAIVLGIIQGLTEFLPISSSAHLRIFPALLGWDDPGAAFTAIIQIGTLAAVLIYFYQDILRITSATISGLVNRNPFGSQDSRMGWMISAGTIPIVVLGLLFKKNIETTFRSLYIISGSLILLALVLMYAEYLVKKREARGEKMLSLDKVDWKEAIIIGLAQSLALIPGSSRSGTTITGGLFLGMTRETAARFSFLLSLPAVFAAGVYQLLKVWPELMASGDELVNLTVATVVSGVIGYASIAFLLDYLKKHSTYLFIIYRILLGVFLLAMLSMGKLEAF.

Transmembrane regions (helical) follow at residues 1–21 (MDIIQAIVLGIIQGLTEFLPI), 40–60 (GAAFTAIIQIGTLAAVLIYFY), 85–105 (SRMGWMISAGTIPIVVLGLLF), 117–137 (YIISGSLILLALVLMYAEYLV), 196–216 (FSFLLSLPAVFAAGVYQLLKV), 232–252 (VATVVSGVIGYASIAFLLDYL), and 258–278 (YLFIIYRILLGVFLLAMLSMG).

This sequence belongs to the UppP family.

Its subcellular location is the cell inner membrane. The catalysed reaction is di-trans,octa-cis-undecaprenyl diphosphate + H2O = di-trans,octa-cis-undecaprenyl phosphate + phosphate + H(+). In terms of biological role, catalyzes the dephosphorylation of undecaprenyl diphosphate (UPP). Confers resistance to bacitracin. The chain is Undecaprenyl-diphosphatase from Chloroherpeton thalassium (strain ATCC 35110 / GB-78).